We begin with the raw amino-acid sequence, 1687 residues long: MRRPPPLGPTTASGPEGNVRNLRKRQAPGPGAAGGCGPEAGGRGENRQKRRMVARATPGRGEVKSDKSVAASGAGKAARRRVEGRRGQVSPSDRRGLEAAKEAEFPLQTERHTKEKRKVTEASTDDPQPGFDLVRKESLTSSESFQTVECLRSLGKEGIVEGIKRRIRNKKLKSLENPPLKITENEATQNIKVEFQDELYKNTLKYSCNILSPEVENNFVFKLRDCNCFPHSKDCNDENNLPYEPDGGCMHVAENFSKKENFRSLAEKSDTNNIPQLLQTEENVMGVNKLLPEESDLYQSKINGLLPCLQREKNKYSIEESSVGRKPRKRMKLSEKADETVTQMNFSNEYNKSELMLQENQMIADGKEAEAKSPLNVLRKVSHNTVSLMDHLLSVPEMVEKETSSEHHVNAVFQKTIEPLLKEETENASEPLGYENMALKEDFKSKSCIGKSPEYHIERRSSREDLRSDSEELKLSCQRTIPMTGKRTWPYYSCARISAWCWKKASLPESSYFLPGSQKSCKKVDVPKHQTNKTHLTDSKLLLQSSLTETNTESSSKEKLDSNLNCLFSVSAVEHTLMVIKEPIIKDDKKIKSEELSRSGSEVISNTTEDTQLTSDTQSLTGNKKRDRGNLTKLNLTAASKDGQEANNSTGKTIHRKACVAKQTFVVPDLVKILNTGRLTNFKIPLLKNKTKKRKEVNAKSSEREAYSPLELLDNLSGADTRQNRSKENVSMTMLGPQTLSIQNSVTPVQASSDSFYNKNSCSISPSFTKHGNSSKPSNHFSEPGNIVSNKEVASLTVENNAFSSDPGYVEKSPSFCCNKQETFRPVSSEVRGRKITKNFSEVGFPDILKAYEDDVLLIDVIQDDPDLFGVSNEGELSFTSEVPRISQEPNVPGEHQLTDSKYVETPVKKEPSDDLRELPVLDCGPIKPDICASNSAASEIRHDPKDANTSLGEVANETSENETLGDFSEQIKGSDLDEKHRFTDKVITKEEKENIYEVRKSKDSRNADIMVGECQFAAPVPKPLCLLVPPLNLSGHQEDTILNTWMNDFRFLGKHSVLKLQNPETCEIFKREKNVGVFQKSLGLMIPYKYCKFHFNTLRGCERPLCKFAHVPEQGDEKVCMDVFKKYININELCLLQRAVNVFMEYYRKFPPGIYFDLQVLNDLLNSLLKHCLLKEVFQIVNLSIMVKMLPSLKILLNIFEHVATMKLRNAVPALIDIFCKLVEAGMVLDPEHFNYIVKLLYQVQASKQEITAVLEMKSRLQMRQFKKNWKCDLDSALNKLEHCKEKGDWTKLGKLYINVKMGCEKFADFQTFCACIAETLTKNCEDERPDTPFCEFAETVSKDPQNSKVDKGVLGRIGISAMYFYHKLLQWSKGRKVLDKLYELKIHFASLKGLIGPEKLASRCQIVNVAAEIFLKSGSLDGALWVMRESEWIIDTPLWPCDRLDVLNRHNLLCTIAHETLAKSLYRQTFEVLQNLPGFQNSQETVEVSQYSLLFNKLLGSCIESNSLGMSSSVAEFMISKSIPIDFSFLRRLITSLGRSRLWLKARAHYKSALSLGCYPPLEGNLYRKLLLIPSYLSEIEMLLAIEIFMVSNASSIQSPGTSTQILQIVLKRCEDNQSRSNDDYQAAVERLIMAARISDPKLFVKHMTVNVNKEQVYSLEHCSALKWLKENMKWAGKVWLFSNH.

3 disordered regions span residues 1 to 132 (MRRP…PGFD), 596 to 632 (LSRS…GNLT), and 938 to 969 (ASEI…GDFS). Gly residues predominate over residues 31–41 (GAAGGCGPEAG). Over residues 80-113 (RRVEGRRGQVSPSDRRGLEAAKEAEFPLQTERHT) the composition is skewed to basic and acidic residues. Polar residues-rich tracts occupy residues 598–622 (RSGS…SLTG) and 948–963 (ANTS…SENE).

It is found in the cytoplasm. Its subcellular location is the cytosol. In terms of biological role, important for normal spermatogenesis and male fertility. Specifically required for progression to the post-meiotic stages of spermatocyte development. Seems to be necessary for normal expression levels of a number of testis-expressed gene transcripts, although its role in this process is unclear. This is Protein TOPAZ1 (TOPAZ1) from Macaca mulatta (Rhesus macaque).